Reading from the N-terminus, the 158-residue chain is NAD(P)H-quinone oxidoreductase subunit J, chloroplastic (158 aa).

It belongs to the complex I 30 kDa subunit family. NDH is composed of at least 16 different subunits, 5 of which are encoded in the nucleus.

It localises to the plastid. It is found in the chloroplast thylakoid membrane. The catalysed reaction is a plastoquinone + NADH + (n+1) H(+)(in) = a plastoquinol + NAD(+) + n H(+)(out). It catalyses the reaction a plastoquinone + NADPH + (n+1) H(+)(in) = a plastoquinol + NADP(+) + n H(+)(out). In terms of biological role, NDH shuttles electrons from NAD(P)H:plastoquinone, via FMN and iron-sulfur (Fe-S) centers, to quinones in the photosynthetic chain and possibly in a chloroplast respiratory chain. The immediate electron acceptor for the enzyme in this species is believed to be plastoquinone. Couples the redox reaction to proton translocation, and thus conserves the redox energy in a proton gradient. This is NAD(P)H-quinone oxidoreductase subunit J, chloroplastic from Cucumis sativus (Cucumber).